The following is a 389-amino-acid chain: Type II methyltransferase M2.BsuMI (389 aa).

One can recognise an SAM-dependent MTase C5-type domain in the interval 1-299 (MKVVSLFSGI…ENLSQPKGSI (299 aa)). Cysteine 69 is an active-site residue.

Belongs to the class I-like SAM-binding methyltransferase superfamily. C5-methyltransferase family. Monomer. May form a complex with YdiP, also seems to be active alone.

The enzyme catalyses a 2'-deoxycytidine in DNA + S-adenosyl-L-methionine = a 5-methyl-2'-deoxycytidine in DNA + S-adenosyl-L-homocysteine + H(+). Somewhat inhibited by MgCl(2) and spermidine, strongly inhibited by MnCl(2). Functionally, a methylase, recognizes the double-stranded sequence 5'-YTCGAR-3', methylates C-3 on both strands, and protects the DNA from cleavage by the BsuMI endonuclease. This chain is Type II methyltransferase M2.BsuMI (ydiP), found in Bacillus subtilis (strain 168).